Reading from the N-terminus, the 302-residue chain is MVIEQSIYSSSQSTGTAQANLELPLSSPLHLSGRINTKALFSPDNQSQSGGFEFEIGVDEVGRGPLYGSVVVAAAILPKAWSGETEVGLLQDTPLAILTDSKKLTERKREKLFEPVKQHALAYLVVEVPAGVIDEINILQATILGMRVACEQLMVEITKVWRDASELPTAPSTPLGFKLLIDGNKVPDLDEARLATHGICLADMTVTQPAGMVKFCAEAWVKGDARHNAIAAASVLAKVYRDRQLIADGARYPGYGLEGHKGYPTKAHVEAIARLGVLPEHRRSFKPVQQAIEGTLAGTHYS.

In terms of domain architecture, RNase H type-2 spans 53–297 (EFEIGVDEVG…VQQAIEGTLA (245 aa)). Asp-59, Glu-60, and Asp-163 together coordinate a divalent metal cation.

This sequence belongs to the RNase HII family. It depends on Mn(2+) as a cofactor. The cofactor is Mg(2+).

The protein localises to the cytoplasm. The catalysed reaction is Endonucleolytic cleavage to 5'-phosphomonoester.. Its function is as follows. Endonuclease that specifically degrades the RNA of RNA-DNA hybrids. This Psychrobacter sp. (strain PRwf-1) protein is Ribonuclease HII.